A 261-amino-acid chain; its full sequence is Protein LIKE COV 2 (261 aa).

Residues M1–R38 are disordered. Residues M1 to G56 are Cytoplasmic-facing. Positions A7 to T17 are enriched in polar residues. The helical transmembrane segment at F57–V77 threads the bilayer. Over D78–D91 the chain is Extracellular. The chain crosses the membrane as a helical span at residues I92–S112. The Cytoplasmic portion of the chain corresponds to S113–L261.

The protein belongs to the plant COV1 protein family.

The protein resides in the membrane. The sequence is that of Protein LIKE COV 2 from Arabidopsis thaliana (Mouse-ear cress).